Reading from the N-terminus, the 116-residue chain is Phosphoribosyl-AMP cyclohydrolase (116 aa).

Residue Asp81 participates in Mg(2+) binding. Residue Cys82 coordinates Zn(2+). Mg(2+) is bound by residues Asp83 and Asp85. Zn(2+) is bound by residues Cys98 and Cys105.

Belongs to the PRA-CH family. In terms of assembly, homodimer. It depends on Mg(2+) as a cofactor. Zn(2+) is required as a cofactor.

It is found in the cytoplasm. It carries out the reaction 1-(5-phospho-beta-D-ribosyl)-5'-AMP + H2O = 1-(5-phospho-beta-D-ribosyl)-5-[(5-phospho-beta-D-ribosylamino)methylideneamino]imidazole-4-carboxamide. It functions in the pathway amino-acid biosynthesis; L-histidine biosynthesis; L-histidine from 5-phospho-alpha-D-ribose 1-diphosphate: step 3/9. Catalyzes the hydrolysis of the adenine ring of phosphoribosyl-AMP. This Mycolicibacterium vanbaalenii (strain DSM 7251 / JCM 13017 / BCRC 16820 / KCTC 9966 / NRRL B-24157 / PYR-1) (Mycobacterium vanbaalenii) protein is Phosphoribosyl-AMP cyclohydrolase.